Here is a 674-residue protein sequence, read N- to C-terminus: Putative kinase-like protein TMKL1 (674 aa).

The signal sequence occupies residues 1-25 (MGMEALRFLHVIFFFVLILHCHCGT). Residues 26–295 (SLSGSSDVKL…PLKPCLGSSR (270 aa)) are Extracellular-facing. N-linked (GlcNAc...) asparagine glycosylation is found at Asn-57, Asn-90, Asn-95, and Asn-110. LRR repeat units follow at residues 100-122 (HLLSLQLPSANLTGSLPREIGEF), 124-146 (MLQSVFLNINSLSGSIPLELGYT), 148-169 (SLSDVDLSGNALAGVLPPSIWN), and 173-194 (KLVSFKIHGNNLSGVLPEPALP). N-linked (GlcNAc...) asparagine glycans are attached at residues Asn-183 and Asn-195. LRR repeat units follow at residues 200-222 (NLQVLDLGGNKFSGEFPEFITRF), 224-244 (GVKSLDLSSNVFEGLVPEGLG), and 247-269 (ELESLNLSHNNFSGMLPDFGESK). 2 N-linked (GlcNAc...) asparagine glycosylation sites follow: Asn-252 and Asn-257. The helical transmembrane segment at 296 to 323 (LSPGAVAGLVIGLMSGAVVVASLLIGYL) threads the bilayer. The Cytoplasmic segment spans residues 324–674 (QNKKRKSSIE…ETRSDAETPF (351 aa)). The tract at residues 331-350 (SIESEDDLEEGDEEDEIGEK) is disordered. A compositionally biased stretch (acidic residues) spans 333–348 (ESEDDLEEGDEEDEIG). Residue Ser-334 is modified to Phosphoserine. The Protein kinase domain occupies 373-674 (NATGQVMEKT…ETRSDAETPF (302 aa)). A Phosphothreonine modification is found at Thr-375. Ser-454 carries the phosphoserine modification. The disordered stretch occupies residues 649-674 (LEENRPRNRSALYSPTETRSDAETPF).

This sequence belongs to the protein kinase superfamily.

The protein resides in the membrane. Functionally, does not seem to have conserved a kinase activity. In Arabidopsis thaliana (Mouse-ear cress), this protein is Putative kinase-like protein TMKL1 (TMKL1).